Reading from the N-terminus, the 404-residue chain is Argininosuccinate synthase (404 aa).

Residues 10–18 and Ala-37 each bind ATP; that span reads AYSGGLDTS. The L-citrulline site is built by Tyr-90 and Ser-95. An ATP-binding site is contributed by Gly-120. The L-aspartate site is built by Thr-122, Asn-126, and Asp-127. Position 126 (Asn-126) interacts with L-citrulline. L-citrulline is bound by residues Arg-130, Ser-181, Ser-190, Glu-266, and Tyr-278. Residues 173–200 form a disordered region; it reads DKRGESPFSTDANLLHTSSEGKVLEDPW. A compositionally biased stretch (polar residues) spans 179–192; it reads PFSTDANLLHTSSE.

It belongs to the argininosuccinate synthase family. Type 1 subfamily. As to quaternary structure, homotetramer.

The protein localises to the cytoplasm. The catalysed reaction is L-citrulline + L-aspartate + ATP = 2-(N(omega)-L-arginino)succinate + AMP + diphosphate + H(+). It participates in amino-acid biosynthesis; L-arginine biosynthesis; L-arginine from L-ornithine and carbamoyl phosphate: step 2/3. The sequence is that of Argininosuccinate synthase from Novosphingobium aromaticivorans (strain ATCC 700278 / DSM 12444 / CCUG 56034 / CIP 105152 / NBRC 16084 / F199).